The chain runs to 245 residues: MINISTSPRQTLDWTALKPADGSPAVEWRISDSPVPYPEAVATMEARAAAIAAGEATELVWLLEHPPLYTAGTSGHASDLLEERFPLFTTGRGGQLTYHGPGQRVAYVMLDLKRRRPDVRAYVAALEQWIIATLDAFNIRGERREDRVGVWVRRPDKGVGYEDKIAAIGVRLKRWVSLHGIAINVEPDLSHFKAIVPCGISDPRYGVTSLVDLGLPVVMTDVDIALRAAFENIFGETRAAAPAGI.

One can recognise a BPL/LPL catalytic domain in the interval 54–238 (GEATELVWLL…AFENIFGETR (185 aa)). Substrate is bound by residues 92 to 99 (RGGQLTYH), 167 to 169 (AIG), and 180 to 182 (GIA). Cys198 serves as the catalytic Acyl-thioester intermediate.

Belongs to the LipB family.

It localises to the cytoplasm. It catalyses the reaction octanoyl-[ACP] + L-lysyl-[protein] = N(6)-octanoyl-L-lysyl-[protein] + holo-[ACP] + H(+). Its pathway is protein modification; protein lipoylation via endogenous pathway; protein N(6)-(lipoyl)lysine from octanoyl-[acyl-carrier-protein]: step 1/2. Catalyzes the transfer of endogenously produced octanoic acid from octanoyl-acyl-carrier-protein onto the lipoyl domains of lipoate-dependent enzymes. Lipoyl-ACP can also act as a substrate although octanoyl-ACP is likely to be the physiological substrate. This is Octanoyltransferase from Rhodopseudomonas palustris (strain ATCC BAA-98 / CGA009).